The chain runs to 407 residues: Serine/threonine transporter SstT (407 aa).

9 helical membrane passes run 11 to 31 (IIHG…VILA), 43 to 63 (FLGD…VFVL), 82 to 102 (IISL…LLSF), 141 to 161 (ALMT…GIAL), 192 to 212 (LGIF…ALAG), 216 to 236 (LLMV…PLIV), 298 to 318 (MGGA…TLGV), 339 to 359 (ASGV…LFGI), and 363 to 383 (IAMQ…SAET).

Belongs to the dicarboxylate/amino acid:cation symporter (DAACS) (TC 2.A.23) family.

Its subcellular location is the cell inner membrane. It catalyses the reaction L-serine(in) + Na(+)(in) = L-serine(out) + Na(+)(out). It carries out the reaction L-threonine(in) + Na(+)(in) = L-threonine(out) + Na(+)(out). Involved in the import of serine and threonine into the cell, with the concomitant import of sodium (symport system). This is Serine/threonine transporter SstT from Shewanella denitrificans (strain OS217 / ATCC BAA-1090 / DSM 15013).